Reading from the N-terminus, the 41-residue chain is Large ribosomal subunit protein bL36 (41 aa).

This sequence belongs to the bacterial ribosomal protein bL36 family.

In Paracoccus denitrificans (strain Pd 1222), this protein is Large ribosomal subunit protein bL36.